The primary structure comprises 124 residues: Secreted RxLR effector protein 49 (124 aa).

The first 22 residues, 1-22 (MIRRSPLVAVILFVAITHVVLA), serve as a signal peptide directing secretion. The short motif at 57–60 (RSLR) is the RxLR element.

The protein belongs to the RxLR effector family.

It localises to the secreted. Its subcellular location is the host cytoplasm. The protein resides in the host nucleus. Functionally, effector that acts as a broad suppressor of cell death to interrupt plant immunity. Inhibits cell death induced by cell death-inducing proteins, including the PAMP elicitor INF1 from P.infestans. The polypeptide is Secreted RxLR effector protein 49 (Plasmopara viticola (Downy mildew of grapevine)).